We begin with the raw amino-acid sequence, 1544 residues long: MAAPQDLDIAVWLATVHLEQYADTFRRHGLATAGAARGLGHEELKQLGISATGHRKRILRLLQTGTEEGSLDPKSDSAMEPSPSPAPQAQPPKPVPKPRTVFGGLSGPATTQRPGLSPALGGPGVSRSPEPSPRPPPLPTSSSEQSSALNTVEMMPNSIYFGLDSRGRAQAAQDKAPDSSQISAPTPALRPTTGTVHIMDPGCLYYGVQPVGTPGAPDRRESRGVCQGRAEHRLSRQDLEAREDAGYASLELPGDSTLLSPTLETEETSDDLISPYASFSFTADRLTPLLSGWLDKLSPQGNYVFQRRFVQFNGRSLMYFGSDKDPFPKGVIPLTAIEMTRSSKDNKFQVITGQRVFVFRTESEAQRDMWCSTLQSCLKEQRLLGHPRPPQPPRPLRTGMLELRGHKAKVFAALSPGELALYKSEQAFSLGIGICFIELQGCSVRETKSRSFDLLTPHRCFSFTAESGGARQSWAAALQEAVTETLSDYEVAEKIWSNRANRQCADCGSSRPDWAAVNLGVVICKQCAGQHRALGSGISKVQSLKLDTSVWSNEIVQLFIVLGNDRANRFWAGTLPPGEGLHPDATPGPRGEFISRKYRLGLFRKPHPQYPDHSQLLQALCAAVARPNLLKNMTQLLCVEAFEGEEPWFPPAPDGSCPGLLPSDPSPGVYNEVVVRATYSGFLYCSPVSNKAGPSPPRRGRDAPPRLWCVLGAALEMFASENSPEPLSLIQPQDIVCLGVSPPPTDPGDRFPFSFELILAGGRIQHFGTDGADSLEAWTSAVGKWFSPLSCHQLLGPGLLRLGRLWLRSPSHTAPAPGLWLSGFGLLRGDHLFLCSAPGPGPPAPEDMVHLRRLQEISVVSAADTPDKKEHLVLVETGRTLYLQGEGRLDFTAWNAAIGGAAGGGGTGLQEQQMSRGDIPIIVDACISFVTQHGLRLEGVYRKGGARARSLRLLAEFRRDARSVKLRPGEHFVEDVTDTLKRFFRELDDPVTSARLLPRWREAAELPQKNQRLEKYKDVIGCLPRVNRRTLATLIGHLYRVQKCAALNQMCTRNLALLFAPSVFQTDGRGEHEVRVLQELIDGYISVFDIDSDQVAQIDLEVSLITTWKDVQLSQAGDLIMEVYIEQQLPDNCVTLKVSPTLTAEELTNQVLEMRGTAAGMDLWVTFEIREHGELERPLHPKEKVLEQALQWCQLPEPCSASLLLKKVPLAQAGCLFTGIRRESPRVGLLRCREEPPRLLGSRFQERFFLLRGRCLLLLKEKKSSKPEREWPLEGAKVYLGIRKKLKPPTPWGFTLILEKMHLYLSCTDEDEMWDWTTSILKAQHDDQQPVVLRRHSSSDLARQKFGTMPLLPIRGDDSGATLLSANQTLRRLHNRRTLSMFFPMKSSQGSVEEQEELEEPVYEEPVYEEVGAFPELIQDTSTSFSTTREWTVKPENPLTSQKSLDQPFLSKSSTLGQEERPPEPPPGPPSKSSPQARGSLEEQLLQELSSLILRKGETTAGLGSPSQPSSPQSPSPTGLPTQTPGFPTQPPCTSSPPSSQPLT.

Positions 4-68 (PQDLDIAVWL…LRLLQTGTEE (65 aa)) constitute an SAM domain. Disordered stretches follow at residues 64–147 (TGTE…EQSS) and 167–194 (GRAQ…PTTG). Composition is skewed to pro residues over residues 82–97 (SPSP…PVPK) and 130–139 (EPSPRPPPLP). 2 consecutive PH domains span residues 287-379 (TPLL…SCLK) and 394-483 (RPLR…EAVT). The region spanning 480–611 (EAVTETLSDY…LFRKPHPQYP (132 aa)) is the Arf-GAP domain. The C4-type zinc-finger motif lies at 504–527 (CADCGSSRPDWAAVNLGVVICKQC). Residues 907 to 1088 (TGLQEQQMSR…ELIDGYISVF (182 aa)) enclose the Rho-GAP domain. Residues 1117–1210 (GDLIMEVYIE…ASLLLKKVPL (94 aa)) form the Ras-associating domain. Residues 1223–1325 (ESPRVGLLRC…WTTSILKAQH (103 aa)) enclose the PH 3 domain. Residue Thr-1348 is modified to Phosphothreonine. Residues Tyr-1403 and Tyr-1408 each carry the phosphotyrosine modification. Residues 1422-1544 (STSFSTTREW…SSPPSSQPLT (123 aa)) are disordered. Over residues 1438–1457 (PLTSQKSLDQPFLSKSSTLG) the composition is skewed to polar residues. Phosphoserine is present on residues Ser-1444 and Ser-1480. 2 stretches are compositionally biased toward low complexity: residues 1482–1492 (EEQLLQELSSL) and 1502–1527 (GLGS…TPGF).

In terms of assembly, interacts (via SAM domain) with INPPL1/SHIP2. Tyrosine phosphorylated at a low basal level. PDGF treatment stimulates phosphorylation. Tyrosine phosphorylation is increased in cells that are in the process of becoming attached to a substrate and that start spreading and flattening.

The protein localises to the cytoplasm. The protein resides in the cytoskeleton. Its subcellular location is the cell membrane. It localises to the cell projection. It is found in the lamellipodium. The protein localises to the ruffle. In terms of biological role, phosphatidylinositol 3,4,5-trisphosphate-dependent GTPase-activating protein that modulates actin cytoskeleton remodeling by regulating ARF and RHO family members. Is activated by phosphatidylinositol 3,4,5-trisphosphate (PtdIns(3,4,5)P3) binding. Can be activated by phosphatidylinositol 3,4-bisphosphate (PtdIns(3,4,5)P2) binding, albeit with lower efficiency. Acts on ARF6, RAC1, RHOA and CDC42. Plays a role in the internalization of anthrax toxin. In Homo sapiens (Human), this protein is Arf-GAP with Rho-GAP domain, ANK repeat and PH domain-containing protein 3 (ARAP3).